A 450-amino-acid polypeptide reads, in one-letter code: tRNA modification GTPase MnmE (450 aa).

(6S)-5-formyl-5,6,7,8-tetrahydrofolate contacts are provided by Arg-23, Glu-79, and Lys-118. The TrmE-type G domain maps to 214–374 (GITLILVGKP…LKEHILNKVG (161 aa)). Position 224 (Asn-224) interacts with K(+). GTP is bound by residues 224-229 (NAGKSS), 243-249 (TSIAGTT), and 268-271 (DTAG). Position 228 (Ser-228) interacts with Mg(2+). Positions 243, 245, and 248 each coordinate K(+). Residue Thr-249 coordinates Mg(2+). Position 450 (Lys-450) interacts with (6S)-5-formyl-5,6,7,8-tetrahydrofolate.

Belongs to the TRAFAC class TrmE-Era-EngA-EngB-Septin-like GTPase superfamily. TrmE GTPase family. As to quaternary structure, homodimer. Heterotetramer of two MnmE and two MnmG subunits. K(+) serves as cofactor.

The protein resides in the cytoplasm. Exhibits a very high intrinsic GTPase hydrolysis rate. Involved in the addition of a carboxymethylaminomethyl (cmnm) group at the wobble position (U34) of certain tRNAs, forming tRNA-cmnm(5)s(2)U34. This chain is tRNA modification GTPase MnmE, found in Francisella tularensis subsp. tularensis (strain WY96-3418).